The sequence spans 1412 residues: DNA-directed RNA polymerase subunit beta' (1412 aa).

Mg(2+) contacts are provided by Asp543, Asp545, and Asp547. Zn(2+)-binding residues include Cys1017, Cys1092, Cys1099, and Cys1102.

It belongs to the RNA polymerase beta' chain family. As to quaternary structure, the RNAP catalytic core consists of 2 alpha, 1 beta, 1 beta' and 1 omega subunit. When a sigma factor is associated with the core the holoenzyme is formed, which can initiate transcription. It depends on Mg(2+) as a cofactor. Zn(2+) is required as a cofactor.

The catalysed reaction is RNA(n) + a ribonucleoside 5'-triphosphate = RNA(n+1) + diphosphate. In terms of biological role, DNA-dependent RNA polymerase catalyzes the transcription of DNA into RNA using the four ribonucleoside triphosphates as substrates. The polypeptide is DNA-directed RNA polymerase subunit beta' (Mesomycoplasma hyopneumoniae (strain 7448) (Mycoplasma hyopneumoniae)).